Consider the following 265-residue polypeptide: uncharacterized protein (265 aa).

6 residues coordinate a divalent metal cation: histidine 7, histidine 9, glutamate 94, histidine 130, histidine 155, and aspartate 205.

The protein belongs to the metallo-dependent hydrolases superfamily. TatD-type hydrolase family. A divalent metal cation is required as a cofactor.

This is an uncharacterized protein from Escherichia coli O157:H7.